A 346-amino-acid polypeptide reads, in one-letter code: NADH-ubiquinone oxidoreductase chain 2 (346 aa).

Transmembrane regions (helical) follow at residues 25-45 (HWVL…PLIS), 60-80 (FLTQ…NAWA), 95-115 (CLLL…HFWF), 124-144 (LMTA…LLLM), 149-169 (LNPA…GWMG), 178-195 (ILAF…IILV), 200-219 (LALL…FMAL), 247-267 (VLLS…WLII), 274-294 (EMTP…FFYL), and 326-346 (AILA…HAIV).

It belongs to the complex I subunit 2 family.

It is found in the mitochondrion inner membrane. The enzyme catalyses a ubiquinone + NADH + 5 H(+)(in) = a ubiquinol + NAD(+) + 4 H(+)(out). Its function is as follows. Core subunit of the mitochondrial membrane respiratory chain NADH dehydrogenase (Complex I) that is believed to belong to the minimal assembly required for catalysis. Complex I functions in the transfer of electrons from NADH to the respiratory chain. The immediate electron acceptor for the enzyme is believed to be ubiquinone. This is NADH-ubiquinone oxidoreductase chain 2 (MT-ND2) from Anas capensis (Cape teal).